The chain runs to 75 residues: Translation initiation factor IF-1, chloroplastic (75 aa).

This sequence belongs to the IF-1 family. Component of the 30S ribosomal translation pre-initiation complex which assembles on the 30S ribosome in the order IF-2 and IF-3, IF-1 and N-formylmethionyl-tRNA(fMet); mRNA recruitment can occur at any time during PIC assembly.

It localises to the plastid. The protein localises to the chloroplast. In terms of biological role, one of the essential components for the initiation of protein synthesis. Stabilizes the binding of IF-2 and IF-3 on the 30S subunit to which N-formylmethionyl-tRNA(fMet) subsequently binds. Helps modulate mRNA selection, yielding the 30S pre-initiation complex (PIC). Upon addition of the 50S ribosomal subunit IF-1, IF-2 and IF-3 are released leaving the mature 70S translation initiation complex. In Cucumis sativus (Cucumber), this protein is Translation initiation factor IF-1, chloroplastic (infA).